The primary structure comprises 354 residues: 3-dehydroquinate synthase (354 aa).

NAD(+) is bound by residues 106–110 (GVIGD), 130–131 (TS), Lys-143, and Lys-152. Glu-185, His-246, and His-262 together coordinate Zn(2+).

Belongs to the sugar phosphate cyclases superfamily. Dehydroquinate synthase family. Co(2+) is required as a cofactor. It depends on Zn(2+) as a cofactor. Requires NAD(+) as cofactor.

It is found in the cytoplasm. It catalyses the reaction 7-phospho-2-dehydro-3-deoxy-D-arabino-heptonate = 3-dehydroquinate + phosphate. Its pathway is metabolic intermediate biosynthesis; chorismate biosynthesis; chorismate from D-erythrose 4-phosphate and phosphoenolpyruvate: step 2/7. Its function is as follows. Catalyzes the conversion of 3-deoxy-D-arabino-heptulosonate 7-phosphate (DAHP) to dehydroquinate (DHQ). In Leuconostoc mesenteroides subsp. mesenteroides (strain ATCC 8293 / DSM 20343 / BCRC 11652 / CCM 1803 / JCM 6124 / NCDO 523 / NBRC 100496 / NCIMB 8023 / NCTC 12954 / NRRL B-1118 / 37Y), this protein is 3-dehydroquinate synthase.